Here is a 119-residue protein sequence, read N- to C-terminus: Small ribosomal subunit protein uS17 (119 aa).

A compositionally biased stretch (low complexity) spans 1 to 21 (MAEAKTGAKATKSAAAGAADG). The disordered stretch occupies residues 1 to 44 (MAEAKTGAKATKSAAAGAADGASKEKGPKHTPSTPKPRGRRKTR).

The protein belongs to the universal ribosomal protein uS17 family. In terms of assembly, part of the 30S ribosomal subunit.

Its function is as follows. One of the primary rRNA binding proteins, it binds specifically to the 5'-end of 16S ribosomal RNA. The sequence is that of Small ribosomal subunit protein uS17 from Mycobacterium marinum (strain ATCC BAA-535 / M).